We begin with the raw amino-acid sequence, 368 residues long: Somatostatin receptor type 5 (368 aa).

Over 1-45 the chain is Extracellular; sequence MEPLFPASPLTTWNTSSVVPSGSGDENGTLAGLGPSPGARAVVVP. N14 and N27 each carry an N-linked (GlcNAc...) asparagine glycan. The chain crosses the membrane as a helical span at residues 46–66; sequence VLYLLVCAVGLGGNTLVIYVV. Residues 67–77 lie on the Cytoplasmic side of the membrane; sequence LRHAKMKTVTN. The helical transmembrane segment at 78–98 threads the bilayer; sequence IYILNLAVADVLLMLGLPFVA. Residues 99 to 115 are Extracellular-facing; that stretch reads TQNAISYWPFGPVLCRL. Cysteines 113 and 188 form a disulfide. The chain crosses the membrane as a helical span at residues 116-136; it reads VMTLDGINQFTSIFCLTVMSV. At 137-158 the chain is on the cytoplasmic side; sequence DRYLAVVHPIRSARWRRPRVAK. A helical transmembrane segment spans residues 159–179; it reads LASAAVWAFSLVMSLPLVVFA. The Extracellular portion of the chain corresponds to 180 to 207; that stretch reads DIQEGWNTCNLSWPEPVGLWGAVFIIYT. N-linked (GlcNAc...) asparagine glycosylation occurs at N189. The chain crosses the membrane as a helical span at residues 208 to 228; the sequence is SVLGFFGPLLVICLCYLLIVV. Over 229–251 the chain is Cytoplasmic; that stretch reads KLKASGVRVGSTRRRSERKVTRM. Residues 252–272 traverse the membrane as a helical segment; that stretch reads VVVVVLVFAGCWLPFFIVNIV. Residues 273 to 286 are Extracellular-facing; sequence NLAFALPEEPASAG. Residues 287-309 traverse the membrane as a helical segment; the sequence is AYFFVVVLSYANSCANPLLYGFL. Residues 310–368 are Cytoplasmic-facing; it reads SDNFRQSFRKVLCLRKGYGAGAEDADATEPQPGPSSRLQEAMMPVRSCKANGLMQTSKL. C322 carries S-palmitoyl cysteine; by ZDHHC5 lipidation.

Belongs to the G-protein coupled receptor 1 family. In terms of assembly, heterodimer with SSTR2. Heterodimerization with SSTR2 increases cell growth inhibition activity of SSTR2. In terms of processing, palmitoylated by ZDHHC5, but not ZDHHC3, nor ZDHHC8. Palmitoylation creates an additional intracellular loop which is thought to be important for efficient coupling to G-proteins and may target the protein to lipid rafts.

The protein resides in the cell membrane. Functionally, receptor for somatostatin 28 and to a lesser extent for somatostatin-14. The activity of this receptor is mediated by G proteins which inhibit adenylyl cyclase. Increases cell growth inhibition activity of SSTR2 following heterodimerization. In Bos taurus (Bovine), this protein is Somatostatin receptor type 5 (SSTR5).